The following is a 25-amino-acid chain: Caerin-1.17 (25 aa).

Leu-25 carries the post-translational modification Leucine amide.

It belongs to the frog skin active peptide (FSAP) family. Caerin subfamily. Expressed by the skin dorsal glands.

It is found in the secreted. In terms of biological role, caerin-1.17 shows significant activity against Gram-positive organisms, but is less effective against Gram-negative organisms. The chain is Caerin-1.17 from Ranoidea gracilenta (Dainty green tree frog).